A 692-amino-acid chain; its full sequence is Elongation factor G (692 aa).

The tr-type G domain occupies 8-282 (ENTRNIGIMA…GVVDYLPSPV (275 aa)). GTP-binding positions include 17 to 24 (AHIDAGKT), 81 to 85 (DTPGH), and 135 to 138 (NKMD).

The protein belongs to the TRAFAC class translation factor GTPase superfamily. Classic translation factor GTPase family. EF-G/EF-2 subfamily.

Its subcellular location is the cytoplasm. In terms of biological role, catalyzes the GTP-dependent ribosomal translocation step during translation elongation. During this step, the ribosome changes from the pre-translocational (PRE) to the post-translocational (POST) state as the newly formed A-site-bound peptidyl-tRNA and P-site-bound deacylated tRNA move to the P and E sites, respectively. Catalyzes the coordinated movement of the two tRNA molecules, the mRNA and conformational changes in the ribosome. The chain is Elongation factor G from Anoxybacillus flavithermus (strain DSM 21510 / WK1).